The following is a 471-amino-acid chain: Putative multidrug resistance protein MdtD (471 aa).

Topologically, residues 1 to 11 (MTDLPDSTRWQ) are periplasmic. Residues 12–32 (LWIVAFGFFMQSLDTTIVNTA) form a helical membrane-spanning segment. At 33-48 (LPSMAQSLGESPLHMH) the chain is on the cytoplasmic side. A helical transmembrane segment spans residues 49-69 (MVIVSYVLTVAVMLPASGWLA). The Periplasmic segment spans residues 70–76 (DKVGVRN). The helical transmembrane segment at 77 to 97 (IFFTAIVLFTLGSLFCALSAT) threads the bilayer. Residues 98-101 (LNEL) lie on the Cytoplasmic side of the membrane. Residues 102-124 (LLARALQGVGGAMMVPVGRLTVM) traverse the membrane as a helical segment. Residues 125–137 (KIVPREQYMAAMT) lie on the Periplasmic side of the membrane. The chain crosses the membrane as a helical span at residues 138–158 (FVTLPGQVGPLLGPALGGLLV). The Cytoplasmic segment spans residues 159–164 (EYASWH). Residues 165-185 (WIFLINIPVGIIGAIATLMLM) traverse the membrane as a helical segment. Residues 186-196 (PNYTMQTRRFD) lie on the Periplasmic side of the membrane. A helical transmembrane segment spans residues 197 to 217 (LSGFLLLAVGMAVLTLALDGS). Residues 218–224 (KGTGLSP) are Cytoplasmic-facing. The helical transmembrane segment at 225-245 (LAIAGLAAIGVVALVLYLLHA) threads the bilayer. Residues 246-262 (RNNNRALFSLKLFRTRT) are Periplasmic-facing. The helical transmembrane segment at 263-283 (FSLGLAGSFAGRIGSGMLPFM) threads the bilayer. Residues 284–285 (TP) lie on the Cytoplasmic side of the membrane. A helical membrane pass occupies residues 286–306 (VFLQIGLGFSPFHAGLMMIPM). The Periplasmic segment spans residues 307–341 (VLGSMGMKRIVVQVVNRFGYRRVLVATTLGLSLVT). A helical transmembrane segment spans residues 342-362 (LLFMTTALLGWYYVLPFVLFL). Residues 363–395 (QGMVNSTRFSSMNTLTLKDLPDNLASSGNSLLS) are Cytoplasmic-facing. Residues 396–416 (MIMQLSMSIGVTIAGLLLGLF) form a helical membrane-spanning segment. Residues 417–430 (GSQHVSVDSSTTQT) lie on the Periplasmic side of the membrane. A helical membrane pass occupies residues 431–451 (VFMYTWLSMALIIALPAFIFA). At 452 to 471 (RVPNDTHQNVAISRRKRSAQ) the chain is on the cytoplasmic side.

The protein belongs to the major facilitator superfamily. TCR/Tet family.

Its subcellular location is the cell inner membrane. The polypeptide is Putative multidrug resistance protein MdtD (Escherichia fergusonii (strain ATCC 35469 / DSM 13698 / CCUG 18766 / IAM 14443 / JCM 21226 / LMG 7866 / NBRC 102419 / NCTC 12128 / CDC 0568-73)).